A 712-amino-acid chain; its full sequence is Exocyst complex component EXO70I (712 aa).

Positions 1 to 18 (MHKKQLMALLMVPQTSDS) are cleaved as a signal peptide. A coiled-coil region spans residues 26 to 53 (LESAYSDLESLLRSSKQMEQNIETMETR). Residue Asn111 is glycosylated (N-linked (GlcNAc...) asparagine).

Belongs to the EXO70 family. As to quaternary structure, subunit of the exocyst complex that mediates vesicle tethering during exocytosis. Interacts with VPY at the periarbuscular membrane (PAM) around the arbuscule hyphal tips. As to expression, present at low levels in non-mycorrhizal root tips.

The protein localises to the cell membrane. In terms of biological role, component of an exocyst subcomplex specifically required for periarbuscular membrane (PAM) biogenesis during arbuscular mycorrhizal (AM) symbiosis with AM fungi (e.g. Glomus versiforme), especially critical during the early branching phase of arbuscule development; probably involved in STR and STR2 delivery into the PAM. This Medicago truncatula (Barrel medic) protein is Exocyst complex component EXO70I.